Here is a 431-residue protein sequence, read N- to C-terminus: Divergent protein kinase domain 1B (431 aa).

Residues 1–30 (MRRLRRLAHLVLFCPFSKRLQGRLPGLRVR) lie on the Cytoplasmic side of the membrane. A May mediate ER retention motif is present at residues 5 to 6 (RR). The helical transmembrane segment at 31-51 (CIFLAWLGVFAGSWLVYVHYS) threads the bilayer. At 52 to 431 (SYSERCRGHV…WKKISNTKYS (380 aa)) the chain is on the lumenal side. 2 disulfide bridges follow: C57–C94 and C62–C117.

Belongs to the DIPK family. Among the many cysteines in the lumenal domain, most are probably involved in disulfide bonds.

The protein localises to the endoplasmic reticulum membrane. The protein is Divergent protein kinase domain 1B of Homo sapiens (Human).